The following is a 162-amino-acid chain: Large ribosomal subunit protein bL17 (162 aa).

Residues 126–162 (ATAKKATRTRRSKKSAAATEAPAAPAAETTEEAPKAE) form a disordered region. A compositionally biased stretch (basic residues) spans 130-139 (KATRTRRSKK). Residues 140 to 153 (SAAATEAPAAPAAE) are compositionally biased toward low complexity.

The protein belongs to the bacterial ribosomal protein bL17 family. Part of the 50S ribosomal subunit. Contacts protein L32.

This is Large ribosomal subunit protein bL17 from Phocaeicola vulgatus (strain ATCC 8482 / DSM 1447 / JCM 5826 / CCUG 4940 / NBRC 14291 / NCTC 11154) (Bacteroides vulgatus).